Here is a 344-residue protein sequence, read N- to C-terminus: Phenylalanine--tRNA ligase alpha subunit (344 aa).

E256 contacts Mg(2+).

Belongs to the class-II aminoacyl-tRNA synthetase family. Phe-tRNA synthetase alpha subunit type 1 subfamily. In terms of assembly, tetramer of two alpha and two beta subunits. Requires Mg(2+) as cofactor.

It is found in the cytoplasm. It carries out the reaction tRNA(Phe) + L-phenylalanine + ATP = L-phenylalanyl-tRNA(Phe) + AMP + diphosphate + H(+). This is Phenylalanine--tRNA ligase alpha subunit from Bacillus cereus (strain G9842).